Here is a 207-residue protein sequence, read N- to C-terminus: Small ribosomal subunit protein uS4 (207 aa).

The region spanning 96–156 (SRLDNVVYRM…KKSHNQSRIY (61 aa)) is the S4 RNA-binding domain.

This sequence belongs to the universal ribosomal protein uS4 family. In terms of assembly, part of the 30S ribosomal subunit. Contacts protein S5. The interaction surface between S4 and S5 is involved in control of translational fidelity.

In terms of biological role, one of the primary rRNA binding proteins, it binds directly to 16S rRNA where it nucleates assembly of the body of the 30S subunit. With S5 and S12 plays an important role in translational accuracy. In Blochmanniella floridana, this protein is Small ribosomal subunit protein uS4.